The chain runs to 140 residues: uncharacterized protein (140 aa).

A coiled-coil region spans residues 27–65; the sequence is LLGEVSELELQKICFNRSLRNEINQLEEQNDISFVRVER.

This is an uncharacterized protein from Pasteurella multocida (strain Pm70).